We begin with the raw amino-acid sequence, 429 residues long: Serine hydroxymethyltransferase (429 aa).

Residues L127 and 131 to 133 (GHL) each bind (6S)-5,6,7,8-tetrahydrofolate. K236 carries the N6-(pyridoxal phosphate)lysine modification. Residue E252 participates in (6S)-5,6,7,8-tetrahydrofolate binding.

It belongs to the SHMT family. As to quaternary structure, homodimer. Pyridoxal 5'-phosphate is required as a cofactor.

It is found in the cytoplasm. The enzyme catalyses (6R)-5,10-methylene-5,6,7,8-tetrahydrofolate + glycine + H2O = (6S)-5,6,7,8-tetrahydrofolate + L-serine. Its pathway is one-carbon metabolism; tetrahydrofolate interconversion. It functions in the pathway amino-acid biosynthesis; glycine biosynthesis; glycine from L-serine: step 1/1. Its function is as follows. Catalyzes the reversible interconversion of serine and glycine with tetrahydrofolate (THF) serving as the one-carbon carrier. This reaction serves as the major source of one-carbon groups required for the biosynthesis of purines, thymidylate, methionine, and other important biomolecules. Also exhibits THF-independent aldolase activity toward beta-hydroxyamino acids, producing glycine and aldehydes, via a retro-aldol mechanism. The protein is Serine hydroxymethyltransferase of Rhodospirillum centenum (strain ATCC 51521 / SW).